The chain runs to 187 residues: UPF0301 protein VV2869 (187 aa).

It belongs to the UPF0301 (AlgH) family.

This is UPF0301 protein VV2869 from Vibrio vulnificus (strain YJ016).